The sequence spans 274 residues: Type III pantothenate kinase (274 aa).

Residue 6 to 13 (DVGNTNTV) participates in ATP binding. Substrate contacts are provided by residues Tyr110 and 117–120 (GADR). Asp119 (proton acceptor) is an active-site residue. Asp139 lines the K(+) pocket. Residue Thr142 coordinates ATP. Position 194 (Thr194) interacts with substrate.

Belongs to the type III pantothenate kinase family. As to quaternary structure, homodimer. It depends on NH4(+) as a cofactor. K(+) is required as a cofactor.

Its subcellular location is the cytoplasm. It carries out the reaction (R)-pantothenate + ATP = (R)-4'-phosphopantothenate + ADP + H(+). Its pathway is cofactor biosynthesis; coenzyme A biosynthesis; CoA from (R)-pantothenate: step 1/5. Functionally, catalyzes the phosphorylation of pantothenate (Pan), the first step in CoA biosynthesis. This chain is Type III pantothenate kinase, found in Koribacter versatilis (strain Ellin345).